An 837-amino-acid polypeptide reads, in one-letter code: Ribosome biogenesis ATPase RIX7 (837 aa).

2 disordered regions span residues 36–56 and 149–207; these read RSLR…EEDE and ITST…LKSL. Serine 42 bears the Phosphoserine mark. Positions 43-56 are enriched in acidic residues; the sequence is QGEEGENNEGEEDE. Polar residues predominate over residues 149 to 163; it reads ITSTWSKSGSVSESI. The segment covering 176 to 192 has biased composition (basic residues); it reads KSKKRSKEGTCKVKRQK. Residue 246 to 253 coordinates ATP; sequence GPPGCGKT. Residues 443-468 are disordered; it reads PTTATDSSEDNMEIDETANGDESSLK. A compositionally biased stretch (acidic residues) spans 449–461; that stretch reads SSEDNMEIDETAN. 574 to 581 contacts ATP; sequence GPPGCGKT.

It belongs to the AAA ATPase family.

Its subcellular location is the nucleus. The protein localises to the nucleolus. Functionally, involved in ribosome biogenesis. Seems to be required for restructuring nucleoplasmic 60S pre-ribosomal particles to make them competent for nuclear export. The chain is Ribosome biogenesis ATPase RIX7 (RIX7) from Saccharomyces cerevisiae (strain ATCC 204508 / S288c) (Baker's yeast).